Here is a 703-residue protein sequence, read N- to C-terminus: Zinc finger protein 750 (703 aa).

Residues 25-51 (YKCFQCPFTCNEKSHLFNHMKYGLCKN) form a CCHC-type zinc finger. Positions 27, 30, 43, and 49 each coordinate Zn(2+). 4 disordered regions span residues 64 to 113 (KCPK…DAKE), 350 to 527 (PASS…YGPM), 553 to 614 (WAPR…KQTA), and 630 to 703 (RVAD…TRVS). Residues 67–106 (KSSSLDPKQTHQPEPTSKPATSKSLLNGLSSFDPKSQQGS) show a composition bias toward polar residues. A compositionally biased stretch (low complexity) spans 352-361 (SSPSELNLSS). The span at 367-394 (TECEKGSPVPEAKDPSKDGQRDAEEAKM) shows a compositional bias: basic and acidic residues. Polar residues-rich tracts occupy residues 410-421 (SPTNFTQTSQTF) and 456-477 (GSES…SLQA). Positions 574–611 (TETKGSEDRTSRVETPQDKAHSRTTPDVHTEDSSDEQK) are enriched in basic and acidic residues. The span at 639 to 655 (QEPTRQDVPTLSATENL) shows a compositional bias: polar residues.

It localises to the nucleus. Transcription factor involved in epidermis differentiation. Required for terminal epidermal differentiation: acts downstream of p63/TP63 and activates expression of late epidermal differentiation genes. Specifically binds to the promoter of KLF4 and promotes its expression. In Mus musculus (Mouse), this protein is Zinc finger protein 750 (Znf750).